A 117-amino-acid chain; its full sequence is Ribosome-binding factor A (117 aa).

This sequence belongs to the RbfA family. As to quaternary structure, monomer. Binds 30S ribosomal subunits, but not 50S ribosomal subunits or 70S ribosomes.

It localises to the cytoplasm. In terms of biological role, one of several proteins that assist in the late maturation steps of the functional core of the 30S ribosomal subunit. Associates with free 30S ribosomal subunits (but not with 30S subunits that are part of 70S ribosomes or polysomes). Required for efficient processing of 16S rRNA. May interact with the 5'-terminal helix region of 16S rRNA. The polypeptide is Ribosome-binding factor A (Lactiplantibacillus plantarum (strain ATCC BAA-793 / NCIMB 8826 / WCFS1) (Lactobacillus plantarum)).